The chain runs to 539 residues: Glucose-6-phosphate isomerase (539 aa).

The active-site Proton donor is glutamate 353. Active-site residues include histidine 384 and lysine 505.

This sequence belongs to the GPI family.

The protein resides in the cytoplasm. It catalyses the reaction alpha-D-glucose 6-phosphate = beta-D-fructose 6-phosphate. The protein operates within carbohydrate biosynthesis; gluconeogenesis. It participates in carbohydrate degradation; glycolysis; D-glyceraldehyde 3-phosphate and glycerone phosphate from D-glucose: step 2/4. Catalyzes the reversible isomerization of glucose-6-phosphate to fructose-6-phosphate. The chain is Glucose-6-phosphate isomerase from Ralstonia pickettii (strain 12J).